The following is a 170-amino-acid chain: Transmembrane protein 252 (170 aa).

The next 2 membrane-spanning stretches (helical) occupy residues 8–28 and 40–60; these read ILCALALLMGFLMVCLGAFFI and LIAAYLLLPLGFVILLSGIFW. The segment at 112–147 is disordered; that stretch reads CPAEREASGIPPPLYTETGLEFQDGNDSHPEAPPSY.

It localises to the membrane. The polypeptide is Transmembrane protein 252 (TMEM252) (Pongo abelii (Sumatran orangutan)).